The sequence spans 168 residues: Profilin-3 (168 aa).

The disordered stretch occupies residues 14-36; the sequence is LSLEHSDKPQRRSRAKVKKKKKT. A compositionally biased stretch (basic residues) spans 24–36; it reads RRSRAKVKKKKKT.

Belongs to the profilin family. As to quaternary structure, occurs in many kinds of cells as a complex with monomeric actin in a 1:1 ratio. Binding to the poly-proline motif of formins induces formation of oligomers through the N-terminal hydrophobic residues of PRF3. In terms of tissue distribution, expressed in roots, rosette leaves, cauline leaves, stems and flowers.

It is found in the cytoplasm. The protein resides in the cytoskeleton. Its function is as follows. Binds to actin monomers and regulates the organization of the actin cytoskeleton. Can increase the critical concentration (Cc) of actin assembly in vitro. Acts as a downstream effector of the hydrogen sulfide signaling to regulate the assembly and depolymerization of F-actin. At high concentrations, profilin prevents the polymerization of actin, whereas it enhances it at low concentrations. Binding to the poly-proline motif of formin induces oligomerization of PRF3. PRF3 oligomers inhibit formin-mediated actin assembly to modulate plant immunity triggered by pathogen-associated molecular patterns (PAMPs). The protein is Profilin-3 of Arabidopsis thaliana (Mouse-ear cress).